Here is a 528-residue protein sequence, read N- to C-terminus: Benzoylformate decarboxylase (528 aa).

Residues asparagine 117, leucine 118, and arginine 120 each coordinate Mg(2+). The thiamine pyrophosphate binding stretch occupies residues 377 to 460 (TSTTAQMWQR…VIMNNGTYGA (84 aa)). Positions 428, 455, and 457 each coordinate Ca(2+).

It belongs to the TPP enzyme family. Homotetramer. The cofactor is Ca(2+). Requires thiamine diphosphate as cofactor. It depends on Mg(2+) as a cofactor.

The enzyme catalyses phenylglyoxylate + H(+) = benzaldehyde + CO2. It functions in the pathway aromatic compound metabolism; (R)-mandelate degradation; benzoate from (R)-mandelate: step 3/4. The sequence is that of Benzoylformate decarboxylase (mdlC) from Pseudomonas putida (Arthrobacter siderocapsulatus).